Consider the following 583-residue polypeptide: Poly [ADP-ribose] polymerase 2 (583 aa).

The interval 1 to 77 (MAARRRRSTG…GMPGRSWASK (77 aa)) is disordered. The tract at residues 1-103 (MAARRRRSTG…VDPECTAKVG (103 aa)) is N-terminal region (NTR). 2 consecutive short sequence motifs (nuclear localization signal) follow at residues 21–22 (KR) and 35–40 (PAKKTR). N6-acetyllysine is present on residues Lys-37 and Lys-38. Basic and acidic residues predominate over residues 57 to 67 (ANKDRTEDKQD). The WGR domain occupies 104–201 (KAHVYCEGND…EKFEKVPGKY (98 aa)). Phosphoserine is present on residues Ser-226 and Ser-232. One can recognise a PARP alpha-helical domain in the interval 231–348 (ESQLDLRVQE…DIEIAIKLVK (118 aa)). The PARP catalytic domain occupies 356–583 (HPLDQHYRNL…KVQFNFLQLW (228 aa)). Residues 428–430 (HGS), Gly-437, Arg-444, and Ser-470 contribute to the NAD(+) site. The active-site For poly [ADP-ribose] polymerase activity is Glu-558.

This sequence belongs to the ARTD/PARP family. In terms of assembly, component of a base excision repair (BER) complex, containing at least XRCC1, PARP1, POLB and LRIG3. Homo- and heterodimer with PARP1. Interacts (via the PARP catalytic domain) with HPF1. Interacts with core nucleosomes. Auto poly-ADP-ribosylated on serine residues, leading to dissociation of the PARP2-HPF1 complex from chromatin. Poly-ADP-ribosylated by PARP1. Post-translationally, acetylation reduces DNA binding and enzymatic activity. In terms of processing, proteolytically cleaved by caspase-8 (CASP8) in response to apoptosis, leading to its inactivation. As to expression, widely expressed, mainly in actively dividing tissues. The highest levels are in the brain, heart, pancreas, skeletal muscle and testis; also detected in kidney, liver, lung, placenta, ovary and spleen; levels are low in leukocytes, colon, small intestine, prostate and thymus.

Its subcellular location is the nucleus. The protein resides in the chromosome. It carries out the reaction NAD(+) + (ADP-D-ribosyl)n-acceptor = nicotinamide + (ADP-D-ribosyl)n+1-acceptor + H(+).. It catalyses the reaction L-seryl-[protein] + NAD(+) = O-(ADP-D-ribosyl)-L-seryl-[protein] + nicotinamide + H(+). The catalysed reaction is L-aspartyl-[protein] + NAD(+) = 4-O-(ADP-D-ribosyl)-L-aspartyl-[protein] + nicotinamide. The enzyme catalyses L-glutamyl-[protein] + NAD(+) = 5-O-(ADP-D-ribosyl)-L-glutamyl-[protein] + nicotinamide. ADP-ribosyltransferase activity is regulated via an allosteric activation mechanism. In absence of activation signal, PARP2 is autoinhibited by the PARP alpha-helical domain (also named HD region), which prevents effective NAD(+)-binding. Activity is highly stimulated by signals, which unfold the PARP alpha-helical domain, relieving autoinhibition. Poly-ADP-ribosyltransferase activity is tightly regulated and PARP2 is removed from damaged chromatin following initial poly-ADP-ribosylation of chromatin to avoid prolonged residence (trapping) that has cytotoxic consequences. CHD1L promotes PARP2 removal from chromatin. ADP-ribosyltransferase activity is inhibited by a number of PARP inhibitors (PARPi) compounds, that are used the treatment of breast or ovarian cancers that have defects in DNA repair by homologous recombination. PARPi molecules (niraparib, talazoparib, and, to a lesser extent, olaparib) also trap PARP2 at DNA damage sites. Poly-ADP-ribosyltransferase that mediates poly-ADP-ribosylation of proteins and plays a key role in DNA repair. Mediates glutamate, aspartate or serine ADP-ribosylation of proteins: the ADP-D-ribosyl group of NAD(+) is transferred to the acceptor carboxyl group of target residues and further ADP-ribosyl groups are transferred to the 2'-position of the terminal adenosine moiety, building up a polymer with an average chain length of 20-30 units. Serine ADP-ribosylation of proteins constitutes the primary form of ADP-ribosylation of proteins in response to DNA damage. Mediates glutamate and aspartate ADP-ribosylation of target proteins in absence of HPF1. Following interaction with HPF1, catalyzes serine ADP-ribosylation of target proteins; HPF1 conferring serine specificity by completing the PARP2 active site. PARP2 initiates the repair of double-strand DNA breaks: recognizes and binds DNA breaks within chromatin and recruits HPF1, licensing serine ADP-ribosylation of target proteins, such as histones, thereby promoting decompaction of chromatin and the recruitment of repair factors leading to the reparation of DNA strand breaks. HPF1 initiates serine ADP-ribosylation but restricts the polymerase activity of PARP2 in order to limit the length of poly-ADP-ribose chains. Specifically mediates formation of branched poly-ADP-ribosylation. Branched poly-ADP-ribose chains are specifically recognized by some factors, such as APLF. In addition to proteins, also able to ADP-ribosylate DNA: preferentially acts on 5'-terminal phosphates at DNA strand breaks termini in nicked duplex. This is Poly [ADP-ribose] polymerase 2 from Homo sapiens (Human).